Consider the following 426-residue polypeptide: Gamma-glutamyl phosphate reductase (426 aa).

It belongs to the gamma-glutamyl phosphate reductase family.

The protein resides in the cytoplasm. The enzyme catalyses L-glutamate 5-semialdehyde + phosphate + NADP(+) = L-glutamyl 5-phosphate + NADPH + H(+). It participates in amino-acid biosynthesis; L-proline biosynthesis; L-glutamate 5-semialdehyde from L-glutamate: step 2/2. Functionally, catalyzes the NADPH-dependent reduction of L-glutamate 5-phosphate into L-glutamate 5-semialdehyde and phosphate. The product spontaneously undergoes cyclization to form 1-pyrroline-5-carboxylate. The polypeptide is Gamma-glutamyl phosphate reductase (Cupriavidus pinatubonensis (strain JMP 134 / LMG 1197) (Cupriavidus necator (strain JMP 134))).